Consider the following 330-residue polypeptide: Aspartate--ammonia ligase (330 aa).

It belongs to the class-II aminoacyl-tRNA synthetase family. AsnA subfamily.

It is found in the cytoplasm. It carries out the reaction L-aspartate + NH4(+) + ATP = L-asparagine + AMP + diphosphate + H(+). Its pathway is amino-acid biosynthesis; L-asparagine biosynthesis; L-asparagine from L-aspartate (ammonia route): step 1/1. This Shigella sonnei (strain Ss046) protein is Aspartate--ammonia ligase.